A 599-amino-acid chain; its full sequence is Proline--tRNA ligase (599 aa).

It belongs to the class-II aminoacyl-tRNA synthetase family. ProS type 1 subfamily. Homodimer.

Its subcellular location is the cytoplasm. It carries out the reaction tRNA(Pro) + L-proline + ATP = L-prolyl-tRNA(Pro) + AMP + diphosphate. Catalyzes the attachment of proline to tRNA(Pro) in a two-step reaction: proline is first activated by ATP to form Pro-AMP and then transferred to the acceptor end of tRNA(Pro). As ProRS can inadvertently accommodate and process non-cognate amino acids such as alanine and cysteine, to avoid such errors it has two additional distinct editing activities against alanine. One activity is designated as 'pretransfer' editing and involves the tRNA(Pro)-independent hydrolysis of activated Ala-AMP. The other activity is designated 'posttransfer' editing and involves deacylation of mischarged Ala-tRNA(Pro). The misacylated Cys-tRNA(Pro) is not edited by ProRS. The protein is Proline--tRNA ligase of Prochlorococcus marinus (strain MIT 9303).